The primary structure comprises 313 residues: MSSREIRIATRKSALALWQAEYVKARLEQAHPGLLVTLVPMVSRGDKLLDSPLSKIGGKGLFVKELETALLENNADIAVHSMKDVPMDFPQGLGLFCICEREDPRDAFVSNTFASLDQLPAGSIVGTSSLRRQAQLLARRPDLQIRFLRGNVNTRLAKLDAGEYDAIILAAAGLIRLGFEDRITSAISVDDSLPAGGQGAVGIECRSVDAEIHALLAPLHHEDTAVRVIAERSLNKHLNGGCQVPIACYAVLEGDDVWLRGLVGDPSGSVLLHADARAPQTSAQALGVQVAEALLEQGAADILKAVYGEANNE.

Cysteine 242 bears the S-(dipyrrolylmethanemethyl)cysteine mark.

This sequence belongs to the HMBS family. As to quaternary structure, monomer. It depends on dipyrromethane as a cofactor.

It catalyses the reaction 4 porphobilinogen + H2O = hydroxymethylbilane + 4 NH4(+). The protein operates within porphyrin-containing compound metabolism; protoporphyrin-IX biosynthesis; coproporphyrinogen-III from 5-aminolevulinate: step 2/4. Its function is as follows. Tetrapolymerization of the monopyrrole PBG into the hydroxymethylbilane pre-uroporphyrinogen in several discrete steps. This Pseudomonas syringae pv. syringae (strain B728a) protein is Porphobilinogen deaminase.